Consider the following 239-residue polypeptide: Mitochondrial fission factor homolog B (239 aa).

Topologically, residues 1–219 (MAEINRMQYE…ENKERVKHEM (219 aa)) are cytoplasmic. The tract at residues 107–139 (EGPAPATPHSKEVRSSGHLKRDGLASENSLRQN) is disordered. Basic and acidic residues predominate over residues 115-130 (HSKEVRSSGHLKRDGL). Residues 184-214 (DLALADAASLRRQIIKLNRRLLLLEEENKER) adopt a coiled-coil conformation. Residues 220 to 237 (TMYSIIIIFGLLNSWLWF) form a helical; Anchor for type IV membrane protein membrane-spanning segment. At 238 to 239 (RR) the chain is on the extracellular side.

It belongs to the Tango11 family.

Its subcellular location is the mitochondrion outer membrane. The protein localises to the peroxisome. In terms of biological role, plays a role in mitochondrial and peroxisomal fission. Promotes the recruitment and association of the fission mediator dynamin-related protein 1 (DNM1L) to the mitochondrial surface. This Xenopus laevis (African clawed frog) protein is Mitochondrial fission factor homolog B (mff-b).